The sequence spans 326 residues: Serpentine receptor class alpha-12 (326 aa).

Topologically, residues 1–17 (MSCASEVQAQLFTHPVQ) are extracellular. The helical transmembrane segment at 18-38 (IIYACVQTVLFLATIIGSLLA) threads the bilayer. Over 39 to 54 (IVQLCKKTTIPDSTKV) the chain is Cytoplasmic. Residues 55-75 (LLIGALFFANAHELAYFSSPF) form a helical membrane-spanning segment. Residues 76–101 (KVFKMNLFHTNTSCYPLASTLECIPT) are Extracellular-facing. Residues 102–122 (TTVLAMGISGNMLIQSALSIF) form a helical membrane-spanning segment. Over 123 to 138 (RLLATIFPVCYSRMRA) the chain is Cytoplasmic. The helical transmembrane segment at 139–159 (LPGVVLLFMVLIPSFLSYSWI) threads the bilayer. The Extracellular portion of the chain corresponds to 160–185 (RSDIVLDDYQMFCSQWSANISSRANT). The chain crosses the membrane as a helical span at residues 186–206 (YLEYCSYLTVAHIIINALIIL). Topologically, residues 207–234 (RNRSVESKCRFDVQQRYLNSETLKTTQT) are cytoplasmic. The chain crosses the membrane as a helical span at residues 235-255 (ICYLSIAQFLAMFLYSGGVLF). Over 256–270 (MRKNQKNIPTLIYIN) the chain is Extracellular. Residues 271-291 (VIVWVYAPPYACVSLAPLILF) traverse the membrane as a helical segment. At 292-326 (SLWNLKKQRQIRIQSITVQKETQEDHIRKLQLSWG) the chain is on the cytoplasmic side.

Belongs to the nematode receptor-like protein sra family.

Its subcellular location is the membrane. In Caenorhabditis briggsae, this protein is Serpentine receptor class alpha-12.